The following is a 460-amino-acid chain: Arginine biosynthesis bifunctional protein ArgJ, chloroplastic (460 aa).

The transit peptide at 1-26 (MYLSVPHYPSLKFTAFQSHKRNFRVF) directs the protein to the chloroplast. Positions 202, 228, 239, 328, 455, and 460 each coordinate substrate. T239 serves as the catalytic Nucleophile.

It belongs to the ArgJ family. Heterodimer of an alpha and a beta chain.

It localises to the plastid. Its subcellular location is the chloroplast. The catalysed reaction is N(2)-acetyl-L-ornithine + L-glutamate = N-acetyl-L-glutamate + L-ornithine. The enzyme catalyses L-glutamate + acetyl-CoA = N-acetyl-L-glutamate + CoA + H(+). It functions in the pathway amino-acid biosynthesis; L-arginine biosynthesis; L-ornithine and N-acetyl-L-glutamate from L-glutamate and N(2)-acetyl-L-ornithine (cyclic): step 1/1. It participates in amino-acid biosynthesis; L-arginine biosynthesis; N(2)-acetyl-L-ornithine from L-glutamate: step 1/4. Functionally, catalyzes two activities which are involved in the cyclic version of arginine biosynthesis: the synthesis of acetylglutamate from glutamate and acetyl-CoA, and of ornithine by transacetylation between acetylornithine and glutamate. The protein is Arginine biosynthesis bifunctional protein ArgJ, chloroplastic of Citrullus lanatus (Watermelon).